Consider the following 222-residue polypeptide: Tegument protein UL26 (222 aa).

Belongs to the herpesviridae US22 family. As to quaternary structure, interacts with UL25. Interacts with ISGylation machinery components ISG15, UBA7 and HERC5; these interactions inhibit global protein ISGylation. Post-translationally, ISGylated; ISGylation regulates UL26 stability and inhibits its activities to suppress NF-kappa-B signaling.

The protein localises to the virion tegument. It is found in the host nucleus. In terms of biological role, plays a role in the inhibition of host NF-kappa-B. This inhibition affects both the canonical and the non-canonical pathways. Blocks the induction of host IKK phosphorylation. May also influence the normal phosphorylation state of several tegument proteins including pp28 in virions. Also suppresses virus-induced ISGylation independent of its own ISGylation. The polypeptide is Tegument protein UL26 (UL26) (Homo sapiens (Human)).